A 260-amino-acid chain; its full sequence is Triosephosphate isomerase (260 aa).

11–13 (NWK) is a binding site for substrate. The Electrophile role is filled by H103. The active-site Proton acceptor is the E175. Residues G181, S220, and 241–242 (GG) each bind substrate.

This sequence belongs to the triosephosphate isomerase family. Homodimer.

The protein localises to the cytoplasm. It carries out the reaction D-glyceraldehyde 3-phosphate = dihydroxyacetone phosphate. It functions in the pathway carbohydrate biosynthesis; gluconeogenesis. It participates in carbohydrate degradation; glycolysis; D-glyceraldehyde 3-phosphate from glycerone phosphate: step 1/1. Involved in the gluconeogenesis. Catalyzes stereospecifically the conversion of dihydroxyacetone phosphate (DHAP) to D-glyceraldehyde-3-phosphate (G3P). The sequence is that of Triosephosphate isomerase from Shewanella woodyi (strain ATCC 51908 / MS32).